Here is a 257-residue protein sequence, read N- to C-terminus: UPF0246 protein Shal_1126 (257 aa).

It belongs to the UPF0246 family.

This is UPF0246 protein Shal_1126 from Shewanella halifaxensis (strain HAW-EB4).